A 321-amino-acid chain; its full sequence is Serine/threonine-protein phosphatase 4 catalytic subunit 2 (321 aa).

Mn(2+) contacts are provided by Asp64, His66, Asp92, and Asn124. His125 (proton donor) is an active-site residue. Mn(2+) contacts are provided by His174 and His249.

It belongs to the PPP phosphatase family. PP-4 (PP-X) subfamily. As to quaternary structure, serine/threonine-protein phosphatase 4 (PP4) occurs in different assemblies of the catalytic and one or more regulatory subunits. Mn(2+) is required as a cofactor.

The enzyme catalyses O-phospho-L-seryl-[protein] + H2O = L-seryl-[protein] + phosphate. It carries out the reaction O-phospho-L-threonyl-[protein] + H2O = L-threonyl-[protein] + phosphate. Functionally, protein phosphatase which seems to be involved in larval development but not essential for embryogenesis. In Caenorhabditis elegans, this protein is Serine/threonine-protein phosphatase 4 catalytic subunit 2.